The following is a 126-amino-acid chain: Large ribosomal subunit protein bL17 (126 aa).

It belongs to the bacterial ribosomal protein bL17 family. In terms of assembly, part of the 50S ribosomal subunit. Contacts protein L32.

The polypeptide is Large ribosomal subunit protein bL17 (Aliivibrio fischeri (strain ATCC 700601 / ES114) (Vibrio fischeri)).